The chain runs to 353 residues: Protein RecA (353 aa).

An ATP-binding site is contributed by Gly-74–Thr-81.

Belongs to the RecA family.

The protein resides in the cytoplasm. Can catalyze the hydrolysis of ATP in the presence of single-stranded DNA, the ATP-dependent uptake of single-stranded DNA by duplex DNA, and the ATP-dependent hybridization of homologous single-stranded DNAs. It interacts with LexA causing its activation and leading to its autocatalytic cleavage. This is Protein RecA from Bordetella bronchiseptica (strain ATCC BAA-588 / NCTC 13252 / RB50) (Alcaligenes bronchisepticus).